Consider the following 127-residue polypeptide: Fluoride-specific ion channel FluC 1 (127 aa).

A run of 4 helical transmembrane segments spans residues 4–24, 35–55, 71–91, and 101–121; these read TLLAVFIGGGVGSMARWLVSL, VGTLIVNLVGAFIIGLTLALF, TGFCGGLTTFSTFSVEVVYLI, and GTILLNVAGSLAMTMLAFILV. Na(+)-binding residues include Gly-75 and Thr-78.

The protein belongs to the fluoride channel Fluc/FEX (TC 1.A.43) family.

The protein resides in the cell inner membrane. The catalysed reaction is fluoride(in) = fluoride(out). Its activity is regulated as follows. Na(+) is not transported, but it plays an essential structural role and its presence is essential for fluoride channel function. Its function is as follows. Fluoride-specific ion channel. Important for reducing fluoride concentration in the cell, thus reducing its toxicity. The protein is Fluoride-specific ion channel FluC 1 of Yersinia pseudotuberculosis serotype I (strain IP32953).